The primary structure comprises 488 residues: Cardiolipin synthase 2 (488 aa).

Transmembrane regions (helical) follow at residues Ile-8–Ile-28 and Ile-39–Leu-59. 2 PLD phosphodiesterase domains span residues Met-223–Tyr-250 and Asp-401–Ser-428. Active-site residues include His-228, Lys-230, Asp-235, His-406, Lys-408, and Asp-413.

Belongs to the phospholipase D family. Cardiolipin synthase subfamily.

It localises to the cell membrane. The catalysed reaction is 2 a 1,2-diacyl-sn-glycero-3-phospho-(1'-sn-glycerol) = a cardiolipin + glycerol. Catalyzes the reversible phosphatidyl group transfer from one phosphatidylglycerol molecule to another to form cardiolipin (CL) (diphosphatidylglycerol) and glycerol. In Staphylococcus epidermidis (strain ATCC 35984 / DSM 28319 / BCRC 17069 / CCUG 31568 / BM 3577 / RP62A), this protein is Cardiolipin synthase 2 (cls2).